We begin with the raw amino-acid sequence, 533 residues long: Retinoic acid receptor RXR-beta (533 aa).

Residues 1–23 (MSWAARPPFLPQRHAAGQCGPVG) form a disordered region. The interval 1 to 204 (MSWAARPPFL…PGGPGAGKRL (204 aa)) is modulating. An Omega-N-methylarginine modification is found at R25. The segment at 36–181 (WRRRRPWLDP…GSGPPEDVKP (146 aa)) is disordered. Over residues 46 to 61 (AAAAAAAVAGGEQQTP) the composition is skewed to low complexity. Positions 67–82 (EAGRDGMGDSGRDSRS) are enriched in basic and acidic residues. 2 stretches are compositionally biased toward pro residues: residues 89-109 (NPLPQGVPPPSPPGPPLPPST) and 118-131 (APPPPPMPPPPLGS). Positions 132–143 (PFPVISSSMGSP) are enriched in low complexity. The span at 144 to 153 (GLPPPAPPGF) shows a compositional bias: pro residues. 2 consecutive NR C4-type zinc fingers follow at residues 205-225 (CAICGDRSSGKHYGVYSCEGC) and 241-265 (CRDNKDCTVDKRQRNRCQYCRYQKC). Positions 205-270 (CAICGDRSSG…RYQKCLATGM (66 aa)) form a DNA-binding region, nuclear receptor. The segment at 271 to 295 (KREAVQEERQRGKDKDGDGEGAGGA) is hinge. Basic and acidic residues predominate over residues 276–288 (QEERQRGKDKDGD). 2 disordered regions span residues 276–299 (QEERQRGKDKDGDGEGAGGAPEEM) and 313–336 (QKSDQGVEGPGGTGGSGSSPNDPV). In terms of domain architecture, NR LBD spans 296–529 (PEEMPVDRIL…TFLMEMLEAP (234 aa)). Positions 320-329 (EGPGGTGGSG) are enriched in gly residues.

The protein belongs to the nuclear hormone receptor family. NR2 subfamily. Homodimer (in vitro). Heterodimer with other retinoic acid receptor family members. Binds DNA preferentially as a RAR/RXR heterodimer. Interacts with NR1H3. Interacts with AKAP13. Expressed in aortic endothelial cells (at protein level). Expressed in monocytes. Expressed in a variety of tumor cell lines.

Its subcellular location is the nucleus. The protein resides in the cytoplasm. In terms of biological role, receptor for retinoic acid. Retinoic acid receptors bind as heterodimers to their target response elements in response to their ligands, all-trans or 9-cis retinoic acid, and regulate gene expression in various biological processes. The RAR/RXR heterodimers bind to the retinoic acid response elements (RARE). The polypeptide is Retinoic acid receptor RXR-beta (RXRB) (Homo sapiens (Human)).